The chain runs to 552 residues: Glutamyl-tRNA reductase 1, chloroplastic (552 aa).

Residues 150–153 (TCNR), Ser210, 215–217 (EGQ), and Gln221 contribute to the substrate site. Catalysis depends on Cys151, which acts as the Nucleophile. An NADP(+)-binding site is contributed by 292–297 (GAGKMG).

Belongs to the glutamyl-tRNA reductase family. In terms of tissue distribution, primarily in cotyledons and hypocotyls of greening cucumber seedlings.

Its subcellular location is the plastid. The protein localises to the chloroplast. The enzyme catalyses (S)-4-amino-5-oxopentanoate + tRNA(Glu) + NADP(+) = L-glutamyl-tRNA(Glu) + NADPH + H(+). The protein operates within porphyrin-containing compound metabolism; protoporphyrin-IX biosynthesis; 5-aminolevulinate from L-glutamyl-tRNA(Glu): step 1/2. Its function is as follows. Catalyzes the NADPH-dependent reduction of glutamyl-tRNA(Glu) to glutamate 1-semialdehyde (GSA). The polypeptide is Glutamyl-tRNA reductase 1, chloroplastic (HEMA1) (Cucumis sativus (Cucumber)).